The sequence spans 190 residues: Signal peptidase I W (190 aa).

Residues 4-24 traverse the membrane as a helical segment; it reads ISNILYVIIFTLIIVLTLVVI. Ser-45 is an active-site residue. A helical transmembrane segment spans residues 143 to 163; it reads PIGTAVLLIVPGVMLLVYAFV.

This sequence belongs to the peptidase S26B family.

Its subcellular location is the cell membrane. The enzyme catalyses Cleavage of hydrophobic, N-terminal signal or leader sequences from secreted and periplasmic proteins.. In terms of biological role, required for the cleavage of the signal sequence of TasA and TapA, which are involved in biofilm formation. The polypeptide is Signal peptidase I W (Bacillus subtilis (strain 168)).